The chain runs to 137 residues: Peptide methionine sulfoxide reductase MsrB (137 aa).

The MsrB domain maps to 7 to 129; sequence VDDLKENLSE…NSASLSFTDE (123 aa). Residues Cys46, Cys49, Cys95, and Cys98 each contribute to the Zn(2+) site. The active-site Nucleophile is Cys118.

This sequence belongs to the MsrB Met sulfoxide reductase family. Zn(2+) serves as cofactor.

It catalyses the reaction L-methionyl-[protein] + [thioredoxin]-disulfide + H2O = L-methionyl-(R)-S-oxide-[protein] + [thioredoxin]-dithiol. This is Peptide methionine sulfoxide reductase MsrB from Escherichia fergusonii (strain ATCC 35469 / DSM 13698 / CCUG 18766 / IAM 14443 / JCM 21226 / LMG 7866 / NBRC 102419 / NCTC 12128 / CDC 0568-73).